A 491-amino-acid chain; its full sequence is UDP-N-acetylmuramate--L-alanine ligase (491 aa).

126 to 132 is a binding site for ATP; it reads GTHGKTT.

Belongs to the MurCDEF family.

The protein resides in the cytoplasm. The catalysed reaction is UDP-N-acetyl-alpha-D-muramate + L-alanine + ATP = UDP-N-acetyl-alpha-D-muramoyl-L-alanine + ADP + phosphate + H(+). It participates in cell wall biogenesis; peptidoglycan biosynthesis. Its function is as follows. Cell wall formation. In Enterobacter sp. (strain 638), this protein is UDP-N-acetylmuramate--L-alanine ligase.